Reading from the N-terminus, the 417-residue chain is Serine hydroxymethyltransferase (417 aa).

(6S)-5,6,7,8-tetrahydrofolate-binding positions include Leu-121 and 125 to 127 (GHL). At Lys-230 the chain carries N6-(pyridoxal phosphate)lysine. Position 355–357 (355–357 (SPF)) interacts with (6S)-5,6,7,8-tetrahydrofolate.

The protein belongs to the SHMT family. In terms of assembly, homodimer. Requires pyridoxal 5'-phosphate as cofactor.

Its subcellular location is the cytoplasm. It catalyses the reaction (6R)-5,10-methylene-5,6,7,8-tetrahydrofolate + glycine + H2O = (6S)-5,6,7,8-tetrahydrofolate + L-serine. The protein operates within one-carbon metabolism; tetrahydrofolate interconversion. Its pathway is amino-acid biosynthesis; glycine biosynthesis; glycine from L-serine: step 1/1. Its function is as follows. Catalyzes the reversible interconversion of serine and glycine with tetrahydrofolate (THF) serving as the one-carbon carrier. This reaction serves as the major source of one-carbon groups required for the biosynthesis of purines, thymidylate, methionine, and other important biomolecules. Also exhibits THF-independent aldolase activity toward beta-hydroxyamino acids, producing glycine and aldehydes, via a retro-aldol mechanism. This chain is Serine hydroxymethyltransferase, found in Legionella pneumophila (strain Corby).